Reading from the N-terminus, the 69-residue chain is Ferredoxin-1 (69 aa).

[3Fe-4S] cluster is bound by residues Cys12, Cys18, and Cys57.

Requires [3Fe-4S] cluster as cofactor.

Electron transport protein for the cytochrome P-450-SU1 system. This Streptomyces griseolus protein is Ferredoxin-1 (suaB).